Reading from the N-terminus, the 916-residue chain is Isoleucine--tRNA ligase (916 aa).

The short motif at 58-68 is the 'HIGH' region element; it reads PYANGHLHIGH. Residue glutamate 568 coordinates L-isoleucyl-5'-AMP. The 'KMSKS' region motif lies at 609–613; it reads KMSKS. Residue lysine 612 coordinates ATP. Cysteine 891, cysteine 894, cysteine 906, and cysteine 909 together coordinate Zn(2+).

Belongs to the class-I aminoacyl-tRNA synthetase family. IleS type 1 subfamily. As to quaternary structure, monomer. Requires Zn(2+) as cofactor.

The protein resides in the cytoplasm. The catalysed reaction is tRNA(Ile) + L-isoleucine + ATP = L-isoleucyl-tRNA(Ile) + AMP + diphosphate. In terms of biological role, catalyzes the attachment of isoleucine to tRNA(Ile). As IleRS can inadvertently accommodate and process structurally similar amino acids such as valine, to avoid such errors it has two additional distinct tRNA(Ile)-dependent editing activities. One activity is designated as 'pretransfer' editing and involves the hydrolysis of activated Val-AMP. The other activity is designated 'posttransfer' editing and involves deacylation of mischarged Val-tRNA(Ile). In Campylobacter fetus subsp. fetus (strain 82-40), this protein is Isoleucine--tRNA ligase.